The following is a 532-amino-acid chain: Flavin-containing monooxygenase 1 (532 aa).

The Lumenal portion of the chain corresponds to 1-510 (MVKRVAIVGA…TRTVQETPST (510 aa)). Residues 9–13 (GAGVS), Glu-32, 40–41 (LW), and 61–62 (NS) contribute to the FAD site. NADP(+) is bound by residues 60-61 (SN) and 195-198 (SGTD). The chain crosses the membrane as a helical span at residues 511-531 (FETLLKLFSFLALLVAVFFIF). Position 532 (Leu-532) is a topological domain, cytoplasmic.

This sequence belongs to the FMO family. FAD is required as a cofactor. Expressed in liver, lung and kidney and to a lesser extent in the heart and brain.

The protein resides in the endoplasmic reticulum membrane. The enzyme catalyses hypotaurine + NADPH + O2 + H(+) = taurine + NADP(+) + H2O. It catalyses the reaction hypotaurine + NADH + O2 + H(+) = taurine + NAD(+) + H2O. It carries out the reaction trimethylamine + NADPH + O2 = trimethylamine N-oxide + NADP(+) + H2O. The catalysed reaction is N,N-dimethylaniline + NADPH + O2 + H(+) = N,N-dimethylaniline N-oxide + NADP(+) + H2O. In terms of biological role, broad spectrum monooxygenase that catalyzes the oxygenation of a wide variety of nitrogen- and sulfur-containing compounds including xenobiotics. Catalyzes the S-oxygenation of hypotaurine to produce taurine, an organic osmolyte involved in cell volume regulation as well as a variety of cytoprotective and developmental processes. In vitro, catalyzes the N-oxygenation of trimethylamine (TMA) to produce trimethylamine N-oxide (TMAO) and could therefore participate to the detoxification of this compound that is generated by the action of gut microbiota from dietary precursors such as choline, choline containing compounds, betaine or L-carnitine. The chain is Flavin-containing monooxygenase 1 from Rattus norvegicus (Rat).